We begin with the raw amino-acid sequence, 204 residues long: Translation initiation factor 2 subunit beta (204 aa).

Positions N146–E204 constitute a TRAM domain.

Belongs to the eIF-2-beta/eIF-5 family. In terms of assembly, heterotrimer composed of an alpha, a beta and a gamma chain.

In terms of biological role, eIF-2 functions in the early steps of protein synthesis by forming a ternary complex with GTP and initiator tRNA. This Methanoregula boonei (strain DSM 21154 / JCM 14090 / 6A8) protein is Translation initiation factor 2 subunit beta.